Consider the following 139-residue polypeptide: Ribosome maturation factor RimP (139 aa).

The protein belongs to the RimP family.

It localises to the cytoplasm. Its function is as follows. Required for maturation of 30S ribosomal subunits. The sequence is that of Ribosome maturation factor RimP from Syntrophomonas wolfei subsp. wolfei (strain DSM 2245B / Goettingen).